A 420-amino-acid polypeptide reads, in one-letter code: D-tagatose-1,6-bisphosphate aldolase subunit GatZ (420 aa).

This sequence belongs to the GatZ/KbaZ family. GatZ subfamily. Forms a complex with GatY.

Its pathway is carbohydrate metabolism; D-tagatose 6-phosphate degradation; D-glyceraldehyde 3-phosphate and glycerone phosphate from D-tagatose 6-phosphate: step 2/2. Component of the tagatose-1,6-bisphosphate aldolase GatYZ that is required for full activity and stability of the Y subunit. Could have a chaperone-like function for the proper and stable folding of GatY. When expressed alone, GatZ does not show any aldolase activity. Is involved in the catabolism of galactitol. The chain is D-tagatose-1,6-bisphosphate aldolase subunit GatZ from Escherichia coli O7:K1 (strain IAI39 / ExPEC).